A 1293-amino-acid polypeptide reads, in one-letter code: Phosphoribosylformylglycinamidine synthase (1293 aa).

Residues 305–316 (GAATGSGGEIRD) and Ala-676 contribute to the ATP site. The disordered stretch occupies residues 305–327 (GAATGSGGEIRDEGATGRGSKPK). Mg(2+) contacts are provided by Asp-677, Glu-716, Asn-720, and Asp-884. Position 886 (Ser-886) interacts with ATP. In terms of domain architecture, Glutamine amidotransferase type-1 spans 1040–1293 (MAILREQGVN…MFRNARVNLG (254 aa)). Cys-1133 serves as the catalytic Nucleophile. Active-site residues include His-1258 and Glu-1260.

The protein in the N-terminal section; belongs to the FGAMS family. In terms of assembly, monomer.

It localises to the cytoplasm. It catalyses the reaction N(2)-formyl-N(1)-(5-phospho-beta-D-ribosyl)glycinamide + L-glutamine + ATP + H2O = 2-formamido-N(1)-(5-O-phospho-beta-D-ribosyl)acetamidine + L-glutamate + ADP + phosphate + H(+). It participates in purine metabolism; IMP biosynthesis via de novo pathway; 5-amino-1-(5-phospho-D-ribosyl)imidazole from N(2)-formyl-N(1)-(5-phospho-D-ribosyl)glycinamide: step 1/2. In terms of biological role, phosphoribosylformylglycinamidine synthase involved in the purines biosynthetic pathway. Catalyzes the ATP-dependent conversion of formylglycinamide ribonucleotide (FGAR) and glutamine to yield formylglycinamidine ribonucleotide (FGAM) and glutamate. In Shewanella sp. (strain MR-4), this protein is Phosphoribosylformylglycinamidine synthase.